Consider the following 447-residue polypeptide: uncharacterized protein (447 aa).

The next 12 helical transmembrane spans lie at 17–37, 40–60, 95–115, 118–138, 154–174, 200–220, 243–263, 289–311, 333–353, 361–381, 393–415, and 419–441; these read IMMM…SSSA, VAGP…LFIM, IYWK…AIFI, WLPG…VTIV, AMIK…LLFV, GLIT…IIGV, IVAF…WNQV, AVIL…RILY, MFAI…SLFA, LMGS…FAHL, YYVK…ILIG, and TTSI…AYLV.

The protein belongs to the amino acid-polyamine-organocation (APC) superfamily.

It localises to the cell membrane. May participate in leucine metabolism. May transport leucine or a compound related to leucine metabolism. This is an uncharacterized protein from Bacillus subtilis (strain 168).